A 200-amino-acid chain; its full sequence is Imidazoleglycerol-phosphate dehydratase (200 aa).

It belongs to the imidazoleglycerol-phosphate dehydratase family.

It is found in the cytoplasm. The enzyme catalyses D-erythro-1-(imidazol-4-yl)glycerol 3-phosphate = 3-(imidazol-4-yl)-2-oxopropyl phosphate + H2O. Its pathway is amino-acid biosynthesis; L-histidine biosynthesis; L-histidine from 5-phospho-alpha-D-ribose 1-diphosphate: step 6/9. In Leifsonia xyli subsp. xyli (strain CTCB07), this protein is Imidazoleglycerol-phosphate dehydratase.